Consider the following 386-residue polypeptide: S-adenosylmethionine synthase (386 aa).

H17 contacts ATP. D19 serves as a coordination point for Mg(2+). Residue E45 participates in K(+) binding. Residues E58 and Q101 each contribute to the L-methionine site. The interval 101 to 111 is flexible loop; that stretch reads QSPDISQGVTE. ATP is bound by residues 168 to 170, D242, 248 to 249, A265, and K269; these read DAK and RK. D242 is a binding site for L-methionine. Residue K273 participates in L-methionine binding.

The protein belongs to the AdoMet synthase family. As to quaternary structure, homotetramer; dimer of dimers. Mg(2+) is required as a cofactor. K(+) serves as cofactor.

Its subcellular location is the cytoplasm. It carries out the reaction L-methionine + ATP + H2O = S-adenosyl-L-methionine + phosphate + diphosphate. It participates in amino-acid biosynthesis; S-adenosyl-L-methionine biosynthesis; S-adenosyl-L-methionine from L-methionine: step 1/1. Catalyzes the formation of S-adenosylmethionine (AdoMet) from methionine and ATP. The overall synthetic reaction is composed of two sequential steps, AdoMet formation and the subsequent tripolyphosphate hydrolysis which occurs prior to release of AdoMet from the enzyme. The protein is S-adenosylmethionine synthase of Leptospira interrogans serogroup Icterohaemorrhagiae serovar copenhageni (strain Fiocruz L1-130).